Consider the following 147-residue polypeptide: Deoxyuridine 5'-triphosphate nucleotidohydrolase (147 aa).

Substrate-binding positions include 67 to 69 (RSG), asparagine 80, and 84 to 86 (TID).

Belongs to the dUTPase family. Requires Mg(2+) as cofactor.

The enzyme catalyses dUTP + H2O = dUMP + diphosphate + H(+). Its pathway is pyrimidine metabolism; dUMP biosynthesis; dUMP from dCTP (dUTP route): step 2/2. This enzyme is involved in nucleotide metabolism: it produces dUMP, the immediate precursor of thymidine nucleotides and it decreases the intracellular concentration of dUTP so that uracil cannot be incorporated into DNA. In Syntrophotalea carbinolica (strain DSM 2380 / NBRC 103641 / GraBd1) (Pelobacter carbinolicus), this protein is Deoxyuridine 5'-triphosphate nucleotidohydrolase.